The sequence spans 81 residues: MPKRILQGVVVSDKQEKTIVVKVERRFTHPLLKKTVRRSKNYHAHDETKAFKIGDTVSIEETKPMSKLKRWIVLPAAQAQG.

This sequence belongs to the universal ribosomal protein uS17 family. As to quaternary structure, part of the 30S ribosomal subunit.

In terms of biological role, one of the primary rRNA binding proteins, it binds specifically to the 5'-end of 16S ribosomal RNA. This is Small ribosomal subunit protein uS17 from Methylocella silvestris (strain DSM 15510 / CIP 108128 / LMG 27833 / NCIMB 13906 / BL2).